We begin with the raw amino-acid sequence, 222 residues long: 7-cyano-7-deazaguanine synthase (222 aa).

ATP is bound at residue 11–21; it reads LSGGMDSAVLL. Residues cysteine 192, cysteine 200, cysteine 203, and cysteine 206 each coordinate Zn(2+).

The protein belongs to the QueC family. The cofactor is Zn(2+).

It catalyses the reaction 7-carboxy-7-deazaguanine + NH4(+) + ATP = 7-cyano-7-deazaguanine + ADP + phosphate + H2O + H(+). It participates in purine metabolism; 7-cyano-7-deazaguanine biosynthesis. Its function is as follows. Catalyzes the ATP-dependent conversion of 7-carboxy-7-deazaguanine (CDG) to 7-cyano-7-deazaguanine (preQ(0)). The sequence is that of 7-cyano-7-deazaguanine synthase from Sulfurihydrogenibium sp. (strain YO3AOP1).